The chain runs to 151 residues: Protein Smg homolog (151 aa).

The protein belongs to the Smg family.

The protein is Protein Smg homolog of Laribacter hongkongensis (strain HLHK9).